An 818-amino-acid polypeptide reads, in one-letter code: Lon protease (818 aa).

The 203-residue stretch at 14–216 (LPVLPLRDVV…KVFALIEREI (203 aa)) folds into the Lon N-terminal domain. 370–377 (GPPGVGKT) contributes to the ATP binding site. Residues 605–786 (ESLVGIVTGL…DEVIKVALMH (182 aa)) form the Lon proteolytic domain. Catalysis depends on residues Ser692 and Lys735.

The protein belongs to the peptidase S16 family. Homohexamer. Organized in a ring with a central cavity.

Its subcellular location is the cytoplasm. The catalysed reaction is Hydrolysis of proteins in presence of ATP.. In terms of biological role, ATP-dependent serine protease that mediates the selective degradation of mutant and abnormal proteins as well as certain short-lived regulatory proteins. Required for cellular homeostasis and for survival from DNA damage and developmental changes induced by stress. Degrades polypeptides processively to yield small peptide fragments that are 5 to 10 amino acids long. Binds to DNA in a double-stranded, site-specific manner. This is Lon protease from Wolbachia pipientis subsp. Culex pipiens (strain wPip).